The primary structure comprises 804 residues: Endoplasmin (804 aa).

An N-terminal signal peptide occupies residues 1–21 (MRALWVLGLCCVLLTFGSVRA). Positions 42–44 (SRT) match the SRT pseudosubstrate motif motif. Asparagine 62 carries N-linked (GlcNAc...) asparagine glycosylation. Serine 64 carries the post-translational modification Phosphoserine. N-linked (GlcNAc...) asparagine glycosylation is present at asparagine 107. Residues asparagine 107, aspartate 149, and asparagine 162 each coordinate ATP. Residue lysine 168 is modified to N6-(2-hydroxyisobutyryl)lysine. Serine 172 is subject to Phosphoserine. Residue phenylalanine 199 coordinates ATP. A glycan (N-linked (GlcNAc...) asparagine) is linked at asparagine 217. The tract at residues 288-323 (TVEEPMEEEEAAKEEKEESDDEAAVEEEEEEKKPKT) is disordered. The span at 289–317 (VEEPMEEEEAAKEEKEESDDEAAVEEEEE) shows a compositional bias: acidic residues. A phosphoserine mark is found at serine 306 and serine 403. Lysine 404 is modified (N6-succinyllysine). Asparagine 445 carries an N-linked (GlcNAc...) asparagine glycan. Serine 447 carries the post-translational modification Phosphoserine. Residue lysine 479 is modified to N6-acetyllysine. 2 N-linked (GlcNAc...) asparagine glycosylation sites follow: asparagine 481 and asparagine 502. Lysine 633 carries the post-translational modification N6-succinyllysine. Residues 750 to 804 (DPDAKVEDEPEEEPEETTEDTTEDTEQDEDEEMDVGTDEEEQETAKESTAEKDEL) are disordered. Over residues 757–791 (DEPEEEPEETTEDTTEDTEQDEDEEMDVGTDEEEQ) the composition is skewed to acidic residues. At threonine 786 the chain carries Phosphothreonine. Over residues 792-804 (ETAKESTAEKDEL) the composition is skewed to basic and acidic residues. The short motif at 801–804 (KDEL) is the Prevents secretion from ER element.

This sequence belongs to the heat shock protein 90 family. In terms of assembly, homodimer; disulfide-linked. Component of an EIF2 complex at least composed of CELF1/CUGBP1, CALR, CALR3, EIF2S1, EIF2S2, HSP90B1 and HSPA5. Part of a large chaperone multiprotein complex comprising DNAJB11, HSP90B1, HSPA5, HYOU, PDIA2, PDIA4, PDIA6, PPIB, SDF2L1, UGGT1 and very small amounts of ERP29, but not, or at very low levels, CALR nor CANX. Interacts with AIMP1; regulates its retention in the endoplasmic reticulum. Hyperglycosylated form interacts with OS9; promoting its degradation by the endoplasmic reticulum associated degradation (ERAD). Interacts with CNPY3. This interaction is disrupted in the presence of ATP. Interacts with TLR4 and TLR9, but not with TLR3. Interacts with MZB1 in a calcium-dependent manner. Interacts with METTL23. Interacts with IL1B; the interaction facilitates cargo translocation into the ERGIC. Interacts with EIF2AK3. Phosphorylated by CK2. In terms of processing, N-glycosylated cotranslationally at Asn-217 by STT3A-containing OST-A complex: this glycosylation is constitutive. In response to various stress, 5 additional facultative sites (Asn-62, Asn-107, Asn-445, Asn-481 and Asn-502) can be glycosylated post-translationally by STT3B-containing OST-B complex, leading to a hyperglycosylated form that is degraded by the ER-associated degradation (ERAD) pathway. In normal conditions, the OST-A complex together with CCDC134 prevent glycosylation at facultative sites during protein folding, thereby preventing hyperglycosylation. Mechanistically, nascent HSP90B1 is tethered during translation to a specialized CCDC134-containing translocon that forms a microenvironment for its folding, in which STT3A associates with the SRT pseudosubstrate motif, and prevents access to facultative glycosylation sites until folding is completed, rendering its facultative sites inaccessible to the OST-B complex.

It localises to the endoplasmic reticulum lumen. The protein resides in the sarcoplasmic reticulum lumen. The protein localises to the melanosome. It carries out the reaction ATP + H2O = ADP + phosphate + H(+). In terms of biological role, ATP-dependent chaperone involved in the processing of proteins in the endoplasmic reticulum, regulating their transport. Together with MESD, acts as a modulator of the Wnt pathway by promoting the folding of LRP6, a coreceptor of the canonical Wnt pathway. When associated with CNPY3, required for proper folding of Toll-like receptors. Promotes folding and trafficking of TLR4 to the cell surface. May participate in the unfolding of cytosolic leaderless cargos (lacking the secretion signal sequence) such as the interleukin 1/IL-1 to facilitate their translocation into the ERGIC (endoplasmic reticulum-Golgi intermediate compartment) and secretion; the translocation process is mediated by the cargo receptor TMED10. This is Endoplasmin (HSP90B1) from Macaca fascicularis (Crab-eating macaque).